The sequence spans 517 residues: Gamma-1-syntrophin (517 aa).

The 84-residue stretch at 57 to 140 (TVTIRRQTVG…EVTLTVSFLK (84 aa)) folds into the PDZ domain. In terms of domain architecture, PH spans 283–390 (QIVYMGWCEA…WERAFQTATF (108 aa)).

The protein belongs to the syntrophin family. In terms of assembly, interacts with the dystrophin protein DMD and related proteins DTNA and DTNB. Interacts with DGKZ.

It localises to the cytoplasm. The protein localises to the cytoskeleton. It is found in the nucleus. Functionally, adapter protein that binds to and probably organizes the subcellular localization of a variety of proteins. May link various receptors to the actin cytoskeleton and the dystrophin glycoprotein complex. May participate in regulating the subcellular location of diacylglycerol kinase-zeta to ensure that diacylglycerol is rapidly inactivated following receptor activation. This is Gamma-1-syntrophin (Sntg1) from Mus musculus (Mouse).